The primary structure comprises 204 residues: LexA repressor (204 aa).

The segment at residues 27 to 47 is a DNA-binding region (H-T-H motif); it reads VREIGEAVGLASSSTVHGHLA. Active-site for autocatalytic cleavage activity residues include S126 and K164.

It belongs to the peptidase S24 family. As to quaternary structure, homodimer.

It catalyses the reaction Hydrolysis of Ala-|-Gly bond in repressor LexA.. Its function is as follows. Represses a number of genes involved in the response to DNA damage (SOS response), including recA and lexA. In the presence of single-stranded DNA, RecA interacts with LexA causing an autocatalytic cleavage which disrupts the DNA-binding part of LexA, leading to derepression of the SOS regulon and eventually DNA repair. This Listeria monocytogenes serotype 4b (strain CLIP80459) protein is LexA repressor.